We begin with the raw amino-acid sequence, 98 residues long: NADH-quinone oxidoreductase subunit K (98 aa).

The next 3 membrane-spanning stretches (helical) occupy residues 1–21 (MGHLLGLGAVLFCISLAGIFL), 27–47 (IVLLMSIELMLLSVNVNFIAF), and 59–79 (FVFFILTVAAAEAAIGLAILV).

Belongs to the complex I subunit 4L family. In terms of assembly, NDH-1 is composed of 14 different subunits. Subunits NuoA, H, J, K, L, M, N constitute the membrane sector of the complex.

The protein resides in the cell inner membrane. The catalysed reaction is a quinone + NADH + 5 H(+)(in) = a quinol + NAD(+) + 4 H(+)(out). In terms of biological role, NDH-1 shuttles electrons from NADH, via FMN and iron-sulfur (Fe-S) centers, to quinones in the respiratory chain. The immediate electron acceptor for the enzyme in this species is believed to be ubiquinone. Couples the redox reaction to proton translocation (for every two electrons transferred, four hydrogen ions are translocated across the cytoplasmic membrane), and thus conserves the redox energy in a proton gradient. The polypeptide is NADH-quinone oxidoreductase subunit K (Xanthomonas oryzae pv. oryzae (strain PXO99A)).